Reading from the N-terminus, the 420-residue chain is uncharacterized protein (420 aa).

Belongs to the Rv1128c/1148c/1588c/1702c/1945/3466 family.

This is an uncharacterized protein from Mycobacterium tuberculosis (strain CDC 1551 / Oshkosh).